Here is a 268-residue protein sequence, read N- to C-terminus: Very-long-chain aldehyde decarbonylase GL1-8 (268 aa).

Transmembrane regions (helical) follow at residues isoleucine 26–phenylalanine 46, cysteine 70–tyrosine 90, tryptophan 107–tryptophan 127, and isoleucine 164–threonine 184. The 136-residue stretch at valine 114–threonine 249 folds into the Fatty acid hydroxylase domain.

Belongs to the sterol desaturase family. In terms of assembly, homodimer.

It is found in the endoplasmic reticulum membrane. The catalysed reaction is a long-chain fatty aldehyde + 2 NADPH + O2 + H(+) = a long-chain alkane + formate + 2 NADP(+) + H2O. Functionally, aldehyde decarbonylase involved in the conversion of aldehydes to alkanes. Core component of a very-long-chain alkane synthesis complex. This is Very-long-chain aldehyde decarbonylase GL1-8 from Oryza sativa subsp. indica (Rice).